The primary structure comprises 626 residues: Phosphomethylpyrimidine synthase (626 aa).

Positions 92–106 are enriched in basic and acidic residues; it reads AREVKPEDNGLKGPD. Residues 92 to 117 are disordered; it reads AREVKPEDNGLKGPDRSAGVPPFPNV. Substrate contacts are provided by residues asparagine 219, methionine 248, tyrosine 277, histidine 313, 333 to 335, 374 to 377, and glutamate 413; these read SRG and DGLR. Histidine 417 contributes to the Zn(2+) binding site. Tyrosine 440 contacts substrate. Histidine 481 lines the Zn(2+) pocket. Residues cysteine 561, cysteine 564, and cysteine 569 each contribute to the [4Fe-4S] cluster site.

This sequence belongs to the ThiC family. As to quaternary structure, homodimer. [4Fe-4S] cluster is required as a cofactor.

The enzyme catalyses 5-amino-1-(5-phospho-beta-D-ribosyl)imidazole + S-adenosyl-L-methionine = 4-amino-2-methyl-5-(phosphooxymethyl)pyrimidine + CO + 5'-deoxyadenosine + formate + L-methionine + 3 H(+). The protein operates within cofactor biosynthesis; thiamine diphosphate biosynthesis. Its function is as follows. Catalyzes the synthesis of the hydroxymethylpyrimidine phosphate (HMP-P) moiety of thiamine from aminoimidazole ribotide (AIR) in a radical S-adenosyl-L-methionine (SAM)-dependent reaction. The chain is Phosphomethylpyrimidine synthase from Novosphingobium aromaticivorans (strain ATCC 700278 / DSM 12444 / CCUG 56034 / CIP 105152 / NBRC 16084 / F199).